The primary structure comprises 76 residues: Omega/kappa-hexatoxin-Ar1g (76 aa).

Positions 1–22 are cleaved as a signal peptide; sequence MNTATGFIVLLVLATVLGGIEA. The propeptide occupies 23–35; the sequence is GESHMRKDAMGRV. Intrachain disulfides connect Cys-40–Cys-55, Cys-47–Cys-60, and Cys-54–Cys-74.

The protein belongs to the neurotoxin 08 (Shiva) family. 02 (omega/kappa toxin) subfamily. In terms of tissue distribution, expressed by the venom gland.

It localises to the secreted. Its function is as follows. Toxin that may inhibit ion channels. The sequence is that of Omega/kappa-hexatoxin-Ar1g from Atrax robustus (Sydney funnel-web spider).